Consider the following 433-residue polypeptide: Enolase (433 aa).

Glutamine 167 lines the (2R)-2-phosphoglycerate pocket. Glutamate 209 (proton donor) is an active-site residue. Aspartate 246, glutamate 291, and aspartate 318 together coordinate Mg(2+). Lysine 343, arginine 372, serine 373, and lysine 394 together coordinate (2R)-2-phosphoglycerate. Lysine 343 functions as the Proton acceptor in the catalytic mechanism.

This sequence belongs to the enolase family. Component of the RNA degradosome, a multiprotein complex involved in RNA processing and mRNA degradation. Requires Mg(2+) as cofactor.

The protein localises to the cytoplasm. It localises to the secreted. Its subcellular location is the cell surface. It carries out the reaction (2R)-2-phosphoglycerate = phosphoenolpyruvate + H2O. The protein operates within carbohydrate degradation; glycolysis; pyruvate from D-glyceraldehyde 3-phosphate: step 4/5. In terms of biological role, catalyzes the reversible conversion of 2-phosphoglycerate (2-PG) into phosphoenolpyruvate (PEP). It is essential for the degradation of carbohydrates via glycolysis. The sequence is that of Enolase from Vibrio vulnificus (strain CMCP6).